Consider the following 563-residue polypeptide: MTTTSRPLYISYAGPSLLEMPLLNKGSAFTPQERIEFNLIGLLPQNVETIEEQVTRVYSQYKQCASDLDKHIYLRSIQDNNETLFFRLLDSHLDEMLPIIYTPTVGQACQEFSKIYRTHRGLFISYPERDRIDDILRSATKDRIKIIVVTDSERILGLGDQGIGGMGIPIGKLSLYTACGGISPAYTLPIVLDVGTNNRELLDDPMYMGWRHERVSGKEYEDFIALFIDAVQRRWPDVLLQFEDFAQSNAMPLLEKYRDELCCFNDDIQGTASVAVGTLLAACKAKNETLGQQKVVFVGAGSAGCGIAEHIIAAMRIEGLSESEARKRIFMVDRFGLLTEGMGNLLDFQLRLAQKSADVAGWTAGTETFPQLLDVVTHAGATVLIGVSGQRGLFTEQVVRELYKHCAKPLVMPLSNPTSKVEATPEEILRWTDGNALVATGSPFAPVEINGRTVHIAQCNNSYIFPGIGLGVVACKASRITDRMLMAASNALAECSPMVTGQGDAVLPPLKEIQQVSRKIALAVAKEAQAEGLALETSEEALLAAIERNFWLPGYRAYRRRSV.

The active-site Proton donor is the tyrosine 101. Position 154 (arginine 154) interacts with NAD(+). The active-site Proton acceptor is the lysine 172. The a divalent metal cation site is built by glutamate 243, aspartate 244, and aspartate 267. The NAD(+) site is built by aspartate 267 and asparagine 416.

The protein belongs to the malic enzymes family. As to quaternary structure, homotetramer. The cofactor is Mg(2+). Requires Mn(2+) as cofactor.

It catalyses the reaction (S)-malate + NAD(+) = pyruvate + CO2 + NADH. It carries out the reaction oxaloacetate + H(+) = pyruvate + CO2. The chain is NAD-dependent malic enzyme from Pseudomonas syringae pv. tomato (strain ATCC BAA-871 / DC3000).